Consider the following 286-residue polypeptide: MANAKEIKTKIASVQNTQKITSAMEMVAASKMRKAQDRMAASRPYAENMRKVIGHVAQGSLEYKHPYLEVREAKRVGYIVVSTDRGLCGGLNVNLFKKVVADVKKQREAGAEVEFCTIGARSAQFFNSFGGQVSASASGLGDAPKLADLIGTVRVMLEAYNEGKLDRLYVVFNKFVNTMTQAPVIEQLLPLPKSEDDEFTHQWDYIYEPDPKLLLDTLLVRFVESQVYQGVVENIASEQAARMVAMKAATDNAGELIGDLQLVYNKARQAAITQELSEIVSGAAAV.

The protein belongs to the ATPase gamma chain family. F-type ATPases have 2 components, CF(1) - the catalytic core - and CF(0) - the membrane proton channel. CF(1) has five subunits: alpha(3), beta(3), gamma(1), delta(1), epsilon(1). CF(0) has three main subunits: a, b and c.

The protein localises to the cell inner membrane. Produces ATP from ADP in the presence of a proton gradient across the membrane. The gamma chain is believed to be important in regulating ATPase activity and the flow of protons through the CF(0) complex. This Shewanella pealeana (strain ATCC 700345 / ANG-SQ1) protein is ATP synthase gamma chain.